The chain runs to 401 residues: Elongation factor Tu 2 (401 aa).

Residues 10 to 209 (KPHVNVGTIG…AVDEYIPTPV (200 aa)) enclose the tr-type G domain. Positions 19–26 (GHVDHGKT) are G1. 19 to 26 (GHVDHGKT) is a binding site for GTP. Thr-26 lines the Mg(2+) pocket. A G2 region spans residues 60-64 (GITIA). The G3 stretch occupies residues 81–84 (DCPG). Residues 81–85 (DCPGH) and 136–139 (NKVD) contribute to the GTP site. The tract at residues 136–139 (NKVD) is G4. The interval 174–176 (SAL) is G5.

It belongs to the TRAFAC class translation factor GTPase superfamily. Classic translation factor GTPase family. EF-Tu/EF-1A subfamily. Monomer.

It is found in the cytoplasm. The enzyme catalyses GTP + H2O = GDP + phosphate + H(+). Functionally, GTP hydrolase that promotes the GTP-dependent binding of aminoacyl-tRNA to the A-site of ribosomes during protein biosynthesis. This is Elongation factor Tu 2 from Roseiflexus sp. (strain RS-1).